The following is a 204-amino-acid chain: 5'-deoxynucleotidase HDDC2 (204 aa).

Ala2 carries the N-acetylalanine modification. Residues Ser3 and Ser5 each carry the phosphoserine modification. The HD domain occupies 46–148; sequence VSDHMYRMAV…VKQLDQCEMI (103 aa). A divalent metal cation contacts are provided by His49, His77, Asp78, Glu81, Asp86, Ile87, and Asp143. Residue Ser204 is modified to Phosphoserine.

The protein belongs to the HDDC2 family. Homodimer. Requires Mn(2+) as cofactor. Co(2+) serves as cofactor. The cofactor is Mg(2+).

The catalysed reaction is a 2'-deoxyribonucleoside 5'-phosphate + H2O = a 2'-deoxyribonucleoside + phosphate. Catalyzes the dephosphorylation of the nucleoside 5'-monophosphates deoxyadenosine monophosphate (dAMP), deoxycytidine monophosphate (dCMP), deoxyguanosine monophosphate (dGMP) and deoxythymidine monophosphate (dTMP). This chain is 5'-deoxynucleotidase HDDC2 (HDDC2), found in Homo sapiens (Human).